The sequence spans 337 residues: Terpene cyclase (337 aa).

The chain crosses the membrane as a helical span at residues 5-25 (ASVIFLSLSVLAAVGVWGPFV). An N-linked (GlcNAc...) asparagine glycan is attached at Asn65. 7 helical membrane passes run 72-92 (IAYCFMMQFLANVAVIPVILC), 111-131 (GLLSQLGTSAVIYPLYAMSFI), 149-169 (ALILNMAMGYALPAAITLNVL), 177-197 (IWGILAFTVYPICMKLMARII), 222-242 (VAGGVALQGHLWYLGTELGIF), 267-287 (LQVDYAITFLAMLLLAWHELI), and 298-318 (LGGLIIGWILVGPGATLAAAW).

The protein belongs to the membrane-bound ascI terpene cyclase family.

It localises to the membrane. It functions in the pathway antifungal biosynthesis. In terms of biological role, cyclase; part of the gene cluster that mediates the biosynthesis of the tetrahydropyranyl antifungal agent lanomycin that acts as an inhibitor of CYP51 and blocks the ergosterol biosynthesis. The biosynthesis probably begins with the formation of an hexaketide, followed by methionine mediated alkylation of C-2 and C-6, and methylation of the reduced C-3 oxygen, pyran forming reductive ring closure, oxygenation of C-4, beta-keto reduction, enoyl reduction and dehydration of the remaining oxygens, and finally, acylation with glycine to complete the biosynthesis. In Pyrenophora dematioidea (Helminthosporium dematioideum), this protein is Terpene cyclase.